The sequence spans 164 residues: MNIVDQQTFRDAMSCMGAAVNIITTDGPAGRAGFTASAVCSVTDTPPTLLVCLNRGASVWPVFNENRTLCVNTLSAGQEPLSNLFGGKTPMEHRFAAARWQTGVTGCPQLEEALVSFDCRISQVVSVGTHDILFCAIEAIHRHATPYGLVWFDRSYHALMRPAC.

Belongs to the non-flavoprotein flavin reductase family. RutF subfamily.

The catalysed reaction is FMNH2 + NAD(+) = FMN + NADH + 2 H(+). In terms of biological role, catalyzes the reduction of FMN to FMNH2 which is used to reduce pyrimidine by RutA via the Rut pathway. This is FMN reductase (NADH) RutF from Escherichia coli O81 (strain ED1a).